A 901-amino-acid polypeptide reads, in one-letter code: Protein translocase subunit SecA (901 aa).

ATP is bound by residues glutamine 87, 105 to 109, and aspartate 512; that span reads GEGKT. The Zn(2+) site is built by cysteine 885, cysteine 887, cysteine 896, and histidine 897.

The protein belongs to the SecA family. As to quaternary structure, monomer and homodimer. Part of the essential Sec protein translocation apparatus which comprises SecA, SecYEG and auxiliary proteins SecDF-YajC and YidC. Zn(2+) is required as a cofactor.

The protein resides in the cell inner membrane. Its subcellular location is the cytoplasm. The enzyme catalyses ATP + H2O + cellular proteinSide 1 = ADP + phosphate + cellular proteinSide 2.. Part of the Sec protein translocase complex. Interacts with the SecYEG preprotein conducting channel. Has a central role in coupling the hydrolysis of ATP to the transfer of proteins into and across the cell membrane, serving both as a receptor for the preprotein-SecB complex and as an ATP-driven molecular motor driving the stepwise translocation of polypeptide chains across the membrane. This Salmonella agona (strain SL483) protein is Protein translocase subunit SecA.